We begin with the raw amino-acid sequence, 62 residues long: Toxin Tst2 (62 aa).

One can recognise an LCN-type CS-alpha/beta domain in the interval 1–62; that stretch reads KEGYAMDHEG…KVWDYATNKC (62 aa). 4 disulfides stabilise this stretch: Cys-11–Cys-62, Cys-15–Cys-38, Cys-23–Cys-43, and Cys-27–Cys-45. Cys-62 bears the Cysteine amide mark.

In terms of tissue distribution, expressed by the venom gland.

It is found in the secreted. In terms of biological role, alpha toxins bind voltage-independently at site-3 of sodium channels (Nav) and inhibit the inactivation of the activated channels, thereby blocking neuronal transmission. Is toxic to mice. The sequence is that of Toxin Tst2 from Tityus stigmurus (Brazilian scorpion).